Reading from the N-terminus, the 35-residue chain is Endochitinase 2 (35 aa).

Belongs to the glycosyl hydrolase 19 family. Chitinase class I subfamily.

It carries out the reaction Random endo-hydrolysis of N-acetyl-beta-D-glucosaminide (1-&gt;4)-beta-linkages in chitin and chitodextrins.. Defense against chitin-containing fungal pathogens. The sequence is that of Endochitinase 2 from Capsicum chinense (Scotch bonnet).